A 337-amino-acid polypeptide reads, in one-letter code: Mitochondrial glutathione transporter SLC25A40 (337 aa).

Solcar repeat units follow at residues 14-132 (VTPL…LSAF), 140-224 (NETR…LKRW), and 234-328 (PTFM…GKSF). A run of 6 helical transmembrane segments spans residues 20 to 40 (MIAS…LDVV), 104 to 124 (LWSG…IYFT), 146 to 166 (IVAG…LELI), 200 to 221 (WAPT…YENL), 240 to 260 (FTSG…FDVV), and 299 to 319 (GLFT…AIMI).

Belongs to the mitochondrial carrier (TC 2.A.29) family.

Its subcellular location is the mitochondrion inner membrane. It carries out the reaction glutathione(in) = glutathione(out). Probable mitochondrial transporter required for glutathione import into mitochondria. Glutathione, which plays key roles in oxidative metabolism, is produced exclusively in the cytosol and is imported in many organelles. Mitochondrial glutathione is required for the activity and stability of proteins containing iron-sulfur clusters, as well as erythropoiesis. In Mus musculus (Mouse), this protein is Mitochondrial glutathione transporter SLC25A40.